Here is a 465-residue protein sequence, read N- to C-terminus: Cysteine--tRNA ligase (465 aa).

Residue cysteine 27 participates in Zn(2+) binding. Positions proline 29–histidine 39 match the 'HIGH' region motif. Positions 204, 229, and 233 each coordinate Zn(2+). Positions lysine 261–serine 265 match the 'KMSKS' region motif. An ATP-binding site is contributed by lysine 264.

It belongs to the class-I aminoacyl-tRNA synthetase family. It depends on Zn(2+) as a cofactor.

The protein localises to the cytoplasm. The enzyme catalyses tRNA(Cys) + L-cysteine + ATP = L-cysteinyl-tRNA(Cys) + AMP + diphosphate. The chain is Cysteine--tRNA ligase from Metallosphaera sedula (strain ATCC 51363 / DSM 5348 / JCM 9185 / NBRC 15509 / TH2).